A 484-amino-acid polypeptide reads, in one-letter code: Probable efflux pump outer membrane protein TtgC (484 aa).

An N-terminal signal peptide occupies residues 1–17; that stretch reads MTKSLLSLAVTAFILGG. The N-palmitoyl cysteine moiety is linked to residue Cys18. Cys18 carries the S-diacylglycerol cysteine lipid modification.

It belongs to the outer membrane factor (OMF) (TC 1.B.17) family.

It localises to the cell outer membrane. Functionally, probable outer membrane component of the TtgABC efflux pump with unknown specificity. This is Probable efflux pump outer membrane protein TtgC (ttgC) from Pseudomonas putida (strain ATCC 47054 / DSM 6125 / CFBP 8728 / NCIMB 11950 / KT2440).